Reading from the N-terminus, the 581-residue chain is Neither inactivation nor afterpotential protein G (581 aa).

Residues 1-26 (MGMKFQKILVLAGIVIGFLSIIVVLA) form the signal peptide. Residue 48 to 77 (DYVIVGGGTGGSTLTSLLAKNSNGSVLLIE) participates in FAD binding. N-linked (GlcNAc...) asparagine glycosylation is found at Asn70, Asn156, Asn404, and Asn464. Catalysis depends on His516, which acts as the Proton acceptor.

It belongs to the GMC oxidoreductase family. FAD serves as cofactor.

The protein resides in the secreted. Functionally, oxidoreductase involved in biosynthesis of 3-hydroxyretinal, a chromophore for rhodopsin Rh1. Not responsible for the initial hydroxylation of the retinal ring but rather acts in a subsequent step in chromophore production. May catalyze the conversion of (3R)-3-hydroxyretinol to the 3S enantiomer. This chain is Neither inactivation nor afterpotential protein G (ninaG), found in Drosophila melanogaster (Fruit fly).